A 718-amino-acid chain; its full sequence is DNA ligase (718 aa).

Residues 44–48 (DADYD), 93–94 (SL), and Glu127 contribute to the NAD(+) site. Catalysis depends on Lys129, which acts as the N6-AMP-lysine intermediate. Arg150, Glu186, Lys302, and Lys326 together coordinate NAD(+). Zn(2+) is bound by residues Cys432, Cys435, Cys456, and Cys462. Residues 640 to 718 (TAGSPVAGKT…EDEWLALISG (79 aa)) enclose the BRCT domain.

This sequence belongs to the NAD-dependent DNA ligase family. LigA subfamily. Mg(2+) is required as a cofactor. Requires Mn(2+) as cofactor.

It catalyses the reaction NAD(+) + (deoxyribonucleotide)n-3'-hydroxyl + 5'-phospho-(deoxyribonucleotide)m = (deoxyribonucleotide)n+m + AMP + beta-nicotinamide D-nucleotide.. Functionally, DNA ligase that catalyzes the formation of phosphodiester linkages between 5'-phosphoryl and 3'-hydroxyl groups in double-stranded DNA using NAD as a coenzyme and as the energy source for the reaction. It is essential for DNA replication and repair of damaged DNA. In Rhizobium etli (strain ATCC 51251 / DSM 11541 / JCM 21823 / NBRC 15573 / CFN 42), this protein is DNA ligase.